A 133-amino-acid polypeptide reads, in one-letter code: Histone H2A.Z (133 aa).

Basic residues predominate over residues 1 to 11; sequence MSGKGKVHGGK. The interval 1–30 is disordered; sequence MSGKGKVHGGKGKSSDSAKASTSHSARAGL. N-acetylserine is present on serine 2. N6-acetyllysine occurs at positions 4, 11, and 13. The span at 15–26 shows a compositional bias: low complexity; that stretch reads SDSAKASTSHSA.

It belongs to the histone H2A family. As to quaternary structure, the nucleosome is a histone octamer containing two molecules each of H2A, H2B, H3 and H4 assembled in one H3-H4 heterotetramer and two H2A-H2B heterodimers. The octamer wraps approximately 147 bp of DNA. H2A or its variant H2A.Z forms a heterodimer with H2B. H2A.Z associates with the VPS72/SWC2 subunit of the SWR1 chromatin remodeling complex. Also interacts with RBP1/DNA-directed RNA polymerase II largest subunit. Acetylated once deposited into chromatin.

The protein resides in the nucleus. The protein localises to the chromosome. In terms of biological role, variant histone H2A which can replace H2A in some nucleosomes. Nucleosomes wrap and compact DNA into chromatin, limiting DNA accessibility to the cellular machineries which require DNA as a template. Histones thereby play a central role in transcription regulation, DNA repair, DNA replication and chromosomal stability. DNA accessibility is regulated via a complex set of post-translational modifications of histones, also called histone code, and nucleosome remodeling. This variant is enriched at promoters, it may keep them in a repressed state until the appropriate activation signal is received. Near telomeres, it may counteract gene silencing caused by the spread of heterochromatin proteins. Required for the RNA polymerase II and SPT15/TBP recruitment to the target genes. Involved in chromosome stability. This is Histone H2A.Z (HTZ1) from Meyerozyma guilliermondii (strain ATCC 6260 / CBS 566 / DSM 6381 / JCM 1539 / NBRC 10279 / NRRL Y-324) (Yeast).